A 101-amino-acid chain; its full sequence is NAD(P)H-quinone oxidoreductase subunit 4L, chloroplastic (101 aa).

A run of 3 helical transmembrane segments spans residues 2 to 22, 32 to 52, and 61 to 81; these read IFEH…YGLI, MCLE…SDFF, and IFSI…PAIV.

The protein belongs to the complex I subunit 4L family. In terms of assembly, NDH is composed of at least 16 different subunits, 5 of which are encoded in the nucleus.

It is found in the plastid. The protein resides in the chloroplast thylakoid membrane. It carries out the reaction a plastoquinone + NADH + (n+1) H(+)(in) = a plastoquinol + NAD(+) + n H(+)(out). The enzyme catalyses a plastoquinone + NADPH + (n+1) H(+)(in) = a plastoquinol + NADP(+) + n H(+)(out). Its function is as follows. NDH shuttles electrons from NAD(P)H:plastoquinone, via FMN and iron-sulfur (Fe-S) centers, to quinones in the photosynthetic chain and possibly in a chloroplast respiratory chain. The immediate electron acceptor for the enzyme in this species is believed to be plastoquinone. Couples the redox reaction to proton translocation, and thus conserves the redox energy in a proton gradient. This chain is NAD(P)H-quinone oxidoreductase subunit 4L, chloroplastic, found in Phaseolus vulgaris (Kidney bean).